Consider the following 301-residue polypeptide: Sulfate adenylyltransferase subunit 2 1 (301 aa).

It belongs to the PAPS reductase family. CysD subfamily. Heterodimer composed of CysD, the smaller subunit, and CysN.

It carries out the reaction sulfate + ATP + H(+) = adenosine 5'-phosphosulfate + diphosphate. Its pathway is sulfur metabolism; hydrogen sulfide biosynthesis; sulfite from sulfate: step 1/3. Its function is as follows. With CysN forms the ATP sulfurylase (ATPS) that catalyzes the adenylation of sulfate producing adenosine 5'-phosphosulfate (APS) and diphosphate, the first enzymatic step in sulfur assimilation pathway. APS synthesis involves the formation of a high-energy phosphoric-sulfuric acid anhydride bond driven by GTP hydrolysis by CysN coupled to ATP hydrolysis by CysD. The chain is Sulfate adenylyltransferase subunit 2 1 from Shewanella sediminis (strain HAW-EB3).